The chain runs to 337 residues: Glyceraldehyde-3-phosphate dehydrogenase (337 aa).

NAD(+) contacts are provided by residues 13–14 (RI), D35, and K80. D-glyceraldehyde 3-phosphate is bound by residues 151-153 (SCT), T182, 211-212 (TG), and R234. C152 serves as the catalytic Nucleophile. An NAD(+)-binding site is contributed by N316.

This sequence belongs to the glyceraldehyde-3-phosphate dehydrogenase family. In terms of assembly, homotetramer.

The protein localises to the cytoplasm. The enzyme catalyses D-glyceraldehyde 3-phosphate + phosphate + NAD(+) = (2R)-3-phospho-glyceroyl phosphate + NADH + H(+). Its pathway is carbohydrate degradation; glycolysis; pyruvate from D-glyceraldehyde 3-phosphate: step 1/5. The chain is Glyceraldehyde-3-phosphate dehydrogenase (GAPD) from Mycosarcoma maydis (Corn smut fungus).